The chain runs to 339 residues: MSASGLPFDDFRELIRNLPGPDLGAERAVREREVTLTKPAGSLGRLEEIVAWLATWTGKRTPQVNRPLVAVFAGNHGVTAKNITPFPPSVTAQMVENFAAGGAAINQICIANDLGLKVFDLALEHPTGDITEEAAMDERTCAATMAFGMEAIAGGTDLLCIGEMGIGNTTIAAAIALALFGGTAEDWVGPGTGSTGELMQRKLAAVRQAVALHQPHLQDPLEVLRCLGGREIAAMAGAILAARMEKIPVIVDGFVASAAAAVLYAANPEAIDHCMFGHVSAEPGHRKLLAKMGKEPLLDLGMRLGEGTGAALAANIVKAAALCHSGMATFEQAGVSASK.

Catalysis depends on glutamate 306, which acts as the Proton acceptor.

The protein belongs to the CobT family.

It carries out the reaction 5,6-dimethylbenzimidazole + nicotinate beta-D-ribonucleotide = alpha-ribazole 5'-phosphate + nicotinate + H(+). Its pathway is nucleoside biosynthesis; alpha-ribazole biosynthesis; alpha-ribazole from 5,6-dimethylbenzimidazole: step 1/2. Functionally, catalyzes the synthesis of alpha-ribazole-5'-phosphate from nicotinate mononucleotide (NAMN) and 5,6-dimethylbenzimidazole (DMB). This is Nicotinate-nucleotide--dimethylbenzimidazole phosphoribosyltransferase from Brucella canis (strain ATCC 23365 / NCTC 10854 / RM-666).